A 225-amino-acid polypeptide reads, in one-letter code: Uracil-DNA glycosylase (225 aa).

Catalysis depends on Asp-65, which acts as the Proton acceptor.

This sequence belongs to the uracil-DNA glycosylase (UDG) superfamily. UNG family.

It localises to the cytoplasm. It carries out the reaction Hydrolyzes single-stranded DNA or mismatched double-stranded DNA and polynucleotides, releasing free uracil.. In terms of biological role, excises uracil residues from the DNA which can arise as a result of misincorporation of dUMP residues by DNA polymerase or due to deamination of cytosine. The polypeptide is Uracil-DNA glycosylase (Clostridium perfringens (strain 13 / Type A)).